A 314-amino-acid polypeptide reads, in one-letter code: Large ribosomal subunit protein uL10 (314 aa).

A disordered region spans residues 281–314 (GSTQETPEEKKEEAKKEEKSPDESISEGLGALFQ). Basic and acidic residues predominate over residues 287 to 302 (PEEKKEEAKKEEKSPD).

It belongs to the universal ribosomal protein uL10 family. Part of the 50S ribosomal subunit. Forms part of the ribosomal stalk which helps the ribosome interact with GTP-bound translation factors. Forms a heptameric L10(L12)2(L12)2(L12)2 complex, where L10 forms an elongated spine to which the L12 dimers bind in a sequential fashion.

In terms of biological role, forms part of the ribosomal stalk, playing a central role in the interaction of the ribosome with GTP-bound translation factors. This Thermoplasma acidophilum (strain ATCC 25905 / DSM 1728 / JCM 9062 / NBRC 15155 / AMRC-C165) protein is Large ribosomal subunit protein uL10.